Here is a 571-residue protein sequence, read N- to C-terminus: 2-succinyl-5-enolpyruvyl-6-hydroxy-3-cyclohexene-1-carboxylate synthase (571 aa).

Belongs to the TPP enzyme family. MenD subfamily. In terms of assembly, homodimer. It depends on Mg(2+) as a cofactor. Mn(2+) is required as a cofactor. Thiamine diphosphate serves as cofactor.

The catalysed reaction is isochorismate + 2-oxoglutarate + H(+) = 5-enolpyruvoyl-6-hydroxy-2-succinyl-cyclohex-3-ene-1-carboxylate + CO2. It participates in quinol/quinone metabolism; 1,4-dihydroxy-2-naphthoate biosynthesis; 1,4-dihydroxy-2-naphthoate from chorismate: step 2/7. It functions in the pathway quinol/quinone metabolism; menaquinone biosynthesis. Catalyzes the thiamine diphosphate-dependent decarboxylation of 2-oxoglutarate and the subsequent addition of the resulting succinic semialdehyde-thiamine pyrophosphate anion to isochorismate to yield 2-succinyl-5-enolpyruvyl-6-hydroxy-3-cyclohexene-1-carboxylate (SEPHCHC). In Lysinibacillus sphaericus (strain C3-41), this protein is 2-succinyl-5-enolpyruvyl-6-hydroxy-3-cyclohexene-1-carboxylate synthase.